Here is a 103-residue protein sequence, read N- to C-terminus: Large ribosomal subunit protein bL21 (103 aa).

The protein belongs to the bacterial ribosomal protein bL21 family. In terms of assembly, part of the 50S ribosomal subunit. Contacts protein L20.

This protein binds to 23S rRNA in the presence of protein L20. The polypeptide is Large ribosomal subunit protein bL21 (Mycobacterium marinum (strain ATCC BAA-535 / M)).